The following is a 298-amino-acid chain: MLQQAIDRDPVDRIDRYPTRTAEPAPHIERLDPTVWGEVHSEQLSTFDRDGFSIMENLLSPEEVSEFRAEVERLAADKSLLDDERVIREKTSNRVRSVFEVHKLSAAVADLVRQTRIVGLARQVLGSDVYLHQTRINYMPGFRGTGFYWHSDFETWHAEDGMPAPRAVSLSIALTDNYPFNGSLMVMPGSHRTFVPCVGATPADHYRESLREQEIGVPSTEDITVLAQRYGITQFTGRAGSALLFDSNVMHGSANNITPFPRSNIFLVFNSVENTLVEPFAAPAPRPTYIGSRDFTPL.

Residues 1 to 18 (MLQQAIDRDPVDRIDRYP) show a composition bias toward basic and acidic residues. Residues 1-26 (MLQQAIDRDPVDRIDRYPTRTAEPAP) are disordered. Residue Gln133 coordinates L-ectoine. The Fe cation site is built by His150, Asp152, and His251.

Belongs to the PhyH family. EctD subfamily. In terms of assembly, homodimer. It depends on Fe(2+) as a cofactor.

The catalysed reaction is L-ectoine + 2-oxoglutarate + O2 = 5-hydroxyectoine + succinate + CO2. Functionally, involved in the biosynthesis of 5-hydroxyectoine, called compatible solute, which helps organisms to survive extreme osmotic stress by acting as a highly soluble organic osmolyte. Catalyzes the 2-oxoglutarate-dependent selective hydroxylation of L-ectoine to yield (4S,5S)-5-hydroxyectoine. The polypeptide is Ectoine dioxygenase (Nocardia farcinica (strain IFM 10152)).